The sequence spans 612 residues: Threonine--tRNA ligase (612 aa).

Positions 218 to 509 (DHRKLGVELG…LSEHFGGNFP (292 aa)) are catalytic. Positions 310, 361, and 486 each coordinate Zn(2+).

The protein belongs to the class-II aminoacyl-tRNA synthetase family. In terms of assembly, homodimer. Zn(2+) serves as cofactor.

It is found in the cytoplasm. It carries out the reaction tRNA(Thr) + L-threonine + ATP = L-threonyl-tRNA(Thr) + AMP + diphosphate + H(+). Catalyzes the attachment of threonine to tRNA(Thr) in a two-step reaction: L-threonine is first activated by ATP to form Thr-AMP and then transferred to the acceptor end of tRNA(Thr). Also edits incorrectly charged L-seryl-tRNA(Thr). The chain is Threonine--tRNA ligase from Helicobacter pylori (strain G27).